The chain runs to 105 residues: Heat shock protein HspQ (105 aa).

It belongs to the HspQ family.

Its subcellular location is the cytoplasm. Its function is as follows. Involved in the degradation of certain denaturated proteins, including DnaA, during heat shock stress. This chain is Heat shock protein HspQ, found in Salmonella choleraesuis (strain SC-B67).